A 540-amino-acid polypeptide reads, in one-letter code: Intestinal-type alkaline phosphatase 1 (540 aa).

The N-terminal stretch at 1–20 (MQGDWVLLLLLGLRIHLSFG) is a signal peptide. D62 lines the Mg(2+) pocket. Zn(2+)-binding residues include D62 and S112. S112 serves as the catalytic Phosphoserine intermediate. An intrachain disulfide couples C141 to C203. Residue N142 is glycosylated (N-linked (GlcNAc...) asparagine). S175 provides a ligand contact to Mg(2+). E236, F289, and E290 together coordinate Ca(2+). N-linked (GlcNAc...) asparagine glycosylation occurs at N301. Position 305 (D305) interacts with Ca(2+). Mg(2+) is bound at residue E331. 4 residues coordinate Zn(2+): D336, H340, D377, and H378. N428 is a glycosylation site (N-linked (GlcNAc...) asparagine). H452 lines the Zn(2+) pocket. C487 and C494 form a disulfide bridge. A lipid anchor (GPI-anchor amidated asparagine) is attached at N511. Residues 512-540 (SAITMNNVLLSLQLLVSMLLLVGTALVVS) constitute a propeptide, removed in mature form.

Belongs to the alkaline phosphatase family. Homodimer. Requires Mg(2+) as cofactor. The cofactor is Zn(2+). Ca(2+) is required as a cofactor.

It is found in the cell membrane. The enzyme catalyses a phosphate monoester + H2O = an alcohol + phosphate. Alkaline phosphatase that can hydrolyze various phosphate compounds. The polypeptide is Intestinal-type alkaline phosphatase 1 (Alpi) (Rattus norvegicus (Rat)).